Here is a 415-residue protein sequence, read N- to C-terminus: Chorismate synthase (415 aa).

A disordered region spans residues Glu43–Gln72. Arg48 is an NADP(+) binding site. Residues Arg125 to Ser127, Gly304, His319 to Ser323, and Arg346 each bind FMN. The interval Thr262–Asp310 is disordered. Over residues Asp298 to Thr307 the composition is skewed to gly residues. The span at Pro379–Tyr393 shows a compositional bias: basic and acidic residues. The tract at residues Pro379–Asp415 is disordered.

Belongs to the chorismate synthase family. FMNH2 serves as cofactor.

It catalyses the reaction 5-O-(1-carboxyvinyl)-3-phosphoshikimate = chorismate + phosphate. It functions in the pathway metabolic intermediate biosynthesis; chorismate biosynthesis; chorismate from D-erythrose 4-phosphate and phosphoenolpyruvate: step 7/7. Its function is as follows. Catalyzes the anti-1,4-elimination of the C-3 phosphate and the C-6 proR hydrogen from 5-enolpyruvylshikimate-3-phosphate (EPSP) to yield chorismate, which is the branch point compound that serves as the starting substrate for the three terminal pathways of aromatic amino acid biosynthesis. This reaction introduces a second double bond into the aromatic ring system. The sequence is that of Chorismate synthase from Halomicrobium mukohataei (strain ATCC 700874 / DSM 12286 / JCM 9738 / NCIMB 13541) (Haloarcula mukohataei).